Here is a 378-residue protein sequence, read N- to C-terminus: Spermidine/putrescine import ATP-binding protein PotA (378 aa).

The ABC transporter domain occupies 18–248 (VQLAGIRKCF…PKNLFVAGFI (231 aa)). Residue 50–57 (GPSGCGKT) participates in ATP binding.

The protein belongs to the ABC transporter superfamily. Spermidine/putrescine importer (TC 3.A.1.11.1) family. In terms of assembly, the complex is composed of two ATP-binding proteins (PotA), two transmembrane proteins (PotB and PotC) and a solute-binding protein (PotD).

It is found in the cell inner membrane. The enzyme catalyses ATP + H2O + polyamine-[polyamine-binding protein]Side 1 = ADP + phosphate + polyamineSide 2 + [polyamine-binding protein]Side 1.. Its function is as follows. Part of the ABC transporter complex PotABCD involved in spermidine/putrescine import. Responsible for energy coupling to the transport system. In Escherichia coli O1:K1 / APEC, this protein is Spermidine/putrescine import ATP-binding protein PotA.